The primary structure comprises 174 residues: ATP synthase subunit delta, sodium ion specific (174 aa).

The protein belongs to the ATPase delta chain family. F-type ATPases have 2 components, F(1) - the catalytic core - and F(0) - the membrane proton channel. F(1) has five subunits: alpha(3), beta(3), gamma(1), delta(1), epsilon(1). F(0) has three main subunits: a(1), b(2) and c(10-14). The alpha and beta chains form an alternating ring which encloses part of the gamma chain. F(1) is attached to F(0) by a central stalk formed by the gamma and epsilon chains, while a peripheral stalk is formed by the delta and b chains.

It localises to the cell inner membrane. In terms of biological role, f(1)F(0) ATP synthase produces ATP from ADP in the presence of a proton or sodium gradient. F-type ATPases consist of two structural domains, F(1) containing the extramembraneous catalytic core and F(0) containing the membrane proton channel, linked together by a central stalk and a peripheral stalk. During catalysis, ATP synthesis in the catalytic domain of F(1) is coupled via a rotary mechanism of the central stalk subunits to proton translocation. Functionally, this protein is part of the stalk that links CF(0) to CF(1). It either transmits conformational changes from CF(0) to CF(1) or is implicated in proton conduction. The polypeptide is ATP synthase subunit delta, sodium ion specific (Propionigenium modestum).